The primary structure comprises 1006 residues: MNHGGNTQAVAPMDPNSIENRYGVDGSQTQKYSYQYSTGSESAPWTGHSVENQAVENGNYSNSNYYHPQPTGPATGNVQEIPNTVSFTISSTSGTANVAQDYSGYTPYQTSSDPHNYSNTGYSNYYSGYQQQPSQSYPQPVGAYQNTGAPQPLSSFQNPGSYAGTPSYSGTYYNPADYQTAGGYQSTNYNNQTAGSYPSTNYSNQTPASNQGNYTDYTSNPYQNYTPDAANTHSSTIATTPPVHYQQNYQQWTEYYSQTEVPCAPGTEKLSTPTTSAYSQSFPVPGVTSEMPASNSQPAPSYVQPWRPETDSSHPPSQQPGAAVSTSNDTYWMHQAPSLQAHHPVPPQNNYQSPLETKPLYETPFQGHQRATYPQEMNSQSSFHQAPLGYRQPTQTAPLVDSQRVSKVQIPTNPRIASNLPSGFTKMDKDSTAASAAQAPAYVSVSMPKPKDHTTAMSDPGTFPKSLRGFVERAFARCKDDKEKESCEVALRKIVKKAKEDNTLYTRDWDTEPLSTVTTTNVTNSESSSAQLSSLQNKSPTRRPKSRWEPLVEGKPFVKPASTFSSAVKFGVWNHQNENNKKSSESFQKVDAATGFKPTYSGQNSAKKSFQRPVKRQRFSGGAATAIDDEASSDSDKDLTPYYSSAMALAGSAEEKKRRDSRSKRFEKIQGHSRGNDLTKPKNANVGNLHSRRATALRLSKVFDESGSRAVEDIDWDALTVKGTCQEIEKRYLRLTSAPDPATVRPEDVLEKALIMVQDSQKNYLFKCDQLKSIRQDLTVQRIHNHLTAKVYETHARLALEAGDLPEYNQCLSQLKTLYAEGVEGCSLEFAAYSLLYITLHSNNNRELLSSMSRLSEEDKKDEAVRHALSVRAAVTSGNYVMFFRLYKTAPNMNSCLMDLYVEKMRYKAVNFMSRSCRPTIPVSYIVQVLGFTGAASEGTDEKETDGMEDCLEWLKTHGANIITDSNGDMLLDTKATSTSLFMPEPEDAVAHGDRNLDVNDFFTRT.

Disordered stretches follow at residues 1–75 (MNHG…GPAT), 106–162 (TPYQ…PGSY), 183–239 (GYQS…TIAT), 266–326 (GTEK…AVST), 516–550 (TVTTTNVTNSESSSAQLSSLQNKSPTRRPKSRWEP), 595–638 (GFKP…SDKD), and 650–690 (AGSA…GNLH). 2 stretches are compositionally biased toward polar residues: residues 26–75 (GSQT…GPAT) and 106–115 (TPYQTSSDPH). Low complexity predominate over residues 116-140 (NYSNTGYSNYYSGYQQQPSQSYPQP). Residues 144-162 (YQNTGAPQPLSSFQNPGSY) show a composition bias toward polar residues. Polar residues-rich tracts occupy residues 269–282 (KLSTPTTSAYSQSF) and 313–326 (SHPPSQQPGAAVST). Residues 516 to 539 (TVTTTNVTNSESSSAQLSSLQNKS) are compositionally biased toward low complexity. Positions 609–618 (SFQRPVKRQR) are enriched in basic residues. Basic and acidic residues predominate over residues 653-680 (AEEKKRRDSRSKRFEKIQGHSRGNDLTK). The PCI domain maps to 804–978 (DLPEYNQCLS…DMLLDTKATS (175 aa)).

Belongs to the SAC3 family. Interacts with EER5, SAC3B and CML20.

It is found in the nucleus. Its function is as follows. Component of the TREX-2 complex (transcription and export complex 2), a muliprotein complex that functions in docking export-competent ribonucleoprotein particles (mRNPs) to the nuclear entrance of the nuclear pore complex (nuclear basket). TREX-2 participates in mRNA export and accurate chromatin positioning in the nucleus by tethering genes to the nuclear periphery. This chain is SAC3 family protein A, found in Arabidopsis thaliana (Mouse-ear cress).